A 255-amino-acid chain; its full sequence is uncharacterized protein (255 aa).

Residues 1–18 (MRILIILSIILCSLFTKA) form the signal peptide.

Belongs to the MlaA family.

This is an uncharacterized protein from Rickettsia bellii (strain RML369-C).